A 400-amino-acid chain; its full sequence is Nucleoside permease NupC (400 aa).

Residues 1–3 lie on the Cytoplasmic side of the membrane; it reads MDR. The chain crosses the membrane as a helical span at residues 4–24; it reads VLHFVLALAVVAILALLVSSD. Over 25-36 the chain is Periplasmic; it reads RKKIRIRYVIQL. A helical transmembrane segment spans residues 37–57; the sequence is LVIEVLLAWFFLNSDVGLGFV. Residues 58-86 are Cytoplasmic-facing; that stretch reads KGFSEMFEKLLGFANEGTNFVFGSMNDQG. A helical transmembrane segment spans residues 87 to 107; sequence LAFFFLKVLCPIVFISALIGI. Residues 108–168 are Periplasmic-facing; sequence LQHIRVLPVI…GKISRNRMYT (61 aa). The chain crosses the membrane as a helical span at residues 169–189; the sequence is MAATAMSTVSMSIVGAYMTML. At 190–192 the chain is on the cytoplasmic side; the sequence is EPK. A helical membrane pass occupies residues 193–213; that stretch reads YVVAALVLNMFSTFIVLSLIN. Residues 214–250 are Periplasmic-facing; sequence PYRVDASEENIQMSNLHEGQSFFEMLGEYILAGFKVA. Residues 251 to 271 traverse the membrane as a helical segment; the sequence is IIVAAMLIGFIALIAALNALF. Residues 272–281 lie on the Cytoplasmic side of the membrane; sequence ATVTGWFGYS. Residues 282-302 traverse the membrane as a helical segment; sequence ISFQGILGYIFYPIAWVMGVP. Residues 303–341 lie on the Periplasmic side of the membrane; the sequence is SSEALQVGSIMATKLVSNEFVAMMDLQKIASTLSPRAEG. Residues 342–362 traverse the membrane as a helical segment; the sequence is IISVFLVSFANFSSIGIIAGA. Over 363–378 the chain is Cytoplasmic; sequence VKGLNEEQGNVVSRFG. Residues 379–399 traverse the membrane as a helical segment; the sequence is LKLVYGSTLVSVLSASIAALV. Position 400 (Leu-400) is a topological domain, periplasmic.

Belongs to the concentrative nucleoside transporter (CNT) (TC 2.A.41) family.

The protein resides in the cell inner membrane. The enzyme catalyses adenosine(in) + H(+)(in) = adenosine(out) + H(+)(out). It carries out the reaction uridine(in) + H(+)(in) = uridine(out) + H(+)(out). It catalyses the reaction thymidine(in) + H(+)(in) = thymidine(out) + H(+)(out). The catalysed reaction is cytidine(in) + H(+)(in) = cytidine(out) + H(+)(out). The enzyme catalyses 2'-deoxycytidine(in) + H(+)(in) = 2'-deoxycytidine(out) + H(+)(out). Its activity is regulated as follows. Transport is inhibited by the proton uncoupler dinitrophenol. Inhibited by the nucleoside antibiotic showdomycin. In terms of biological role, nucleoside transport protein that can transport adenosine, uridine, thymidine, cytidine and deoxycytidine. Shows weak activity with inosine and xanthosine. Transport is driven by a proton motive force. Does not transport guanosine, deoxyguanosine, hypoxanthine or uracil. Also shows activity with the chemotherapeutic drugs 3'-azido-3'-deoxythymidine (AZT), 2',3'- dideoxycytidine (ddC) and 2'-deoxy-2',2'-difluorocytidine (gemcitabine). The chain is Nucleoside permease NupC from Escherichia coli (strain K12).